The primary structure comprises 151 residues: Deoxyuridine 5'-triphosphate nucleotidohydrolase (151 aa).

Substrate contacts are provided by residues 70 to 72 (RSG), Asn83, 87 to 89 (LID), and Met97.

It belongs to the dUTPase family. It depends on Mg(2+) as a cofactor.

The catalysed reaction is dUTP + H2O = dUMP + diphosphate + H(+). It functions in the pathway pyrimidine metabolism; dUMP biosynthesis; dUMP from dCTP (dUTP route): step 2/2. This enzyme is involved in nucleotide metabolism: it produces dUMP, the immediate precursor of thymidine nucleotides and it decreases the intracellular concentration of dUTP so that uracil cannot be incorporated into DNA. The protein is Deoxyuridine 5'-triphosphate nucleotidohydrolase of Psychromonas ingrahamii (strain DSM 17664 / CCUG 51855 / 37).